The chain runs to 457 residues: DNA repair protein RadA (457 aa).

The segment at 12–29 (CQACGYESAKWMGKCPNC) adopts a C4-type zinc-finger fold. ATP is bound at residue 97 to 104 (GDPGIGKS). The RadA KNRFG motif motif lies at 254–258 (KNRFG). The lon-protease-like stretch occupies residues 353-457 (DAYLKAAGGV…GEALKKALPD (105 aa)).

The protein belongs to the RecA family. RadA subfamily.

DNA-dependent ATPase involved in processing of recombination intermediates, plays a role in repairing DNA breaks. Stimulates the branch migration of RecA-mediated strand transfer reactions, allowing the 3' invading strand to extend heteroduplex DNA faster. Binds ssDNA in the presence of ADP but not other nucleotides, has ATPase activity that is stimulated by ssDNA and various branched DNA structures, but inhibited by SSB. Does not have RecA's homology-searching function. This Listeria monocytogenes serovar 1/2a (strain ATCC BAA-679 / EGD-e) protein is DNA repair protein RadA.